Consider the following 638-residue polypeptide: Eukaryotic translation initiation factor 2A (638 aa).

WD repeat units lie at residues 287–329 (SKEG…FDFG) and 331–370 (GPRN…KLAN). The segment covering 441–450 (KITKAKHEGI) has biased composition (basic and acidic residues). A disordered region spans residues 441-593 (KITKAKHEGI…SDKERKIRSV (153 aa)). Threonine 463 is modified (phosphothreonine). Low complexity predominate over residues 492-501 (AAAGGVNGNK). Residues 583-593 (ISDKERKIRSV) show a composition bias toward basic and acidic residues.

This sequence belongs to the WD repeat EIF2A family.

Functions in the early steps of protein synthesis of a small number of specific mRNAs. Acts by directing the binding of methionyl-tRNAi to 40S ribosomal subunits. In contrast to the eIF-2 complex, it binds methionyl-tRNAi to 40S subunits in a codon-dependent manner, whereas the eIF-2 complex binds methionyl-tRNAi to 40S subunits in a GTP-dependent manner. The protein is Eukaryotic translation initiation factor 2A of Drosophila melanogaster (Fruit fly).